The primary structure comprises 473 residues: MKTDTPSLETPQAARLRRRQLIRQLLERDKTPLAILFMAAVVGTLVGLAAVAFDKGVAWLQNQRMGALVHTADNYPLLLTVAFLCSAVLAMFGYFLVRKYAPEAGGSGIPEIEGALEDQRPVRWWRVLPVKFFGGLGTLGGGMVLGREGPTVQIGGNIGRMVLDIFRLKGDEARHTLLATGAAAGLAAAFNAPLAGILFIIEEMRPQFRYTLISIKAVFIGVIMSTIMYRIFNHEVALIDVGKLSDAPLNTLWLYLILGIIFGIFGPIFNKWVLGMQDLLHRVHGGNITKWVLMGGAIGGLCGLLGFVAPATSGGGFNLIPIATAGNFSMGMLVFIFVARVITTLLCFSSGAPGGIFAPMLALGTVLGTAFGMVAVELFPQYHLEAGTFAIAGMGALLAASIRAPLTGIILVLEMTDNYQLILPMIITGLGATLLAQFTGGKPLYSAILARTLAKQEAEQLARSKAASASENT.

Topologically, residues 1–32 (MKTDTPSLETPQAARLRRRQLIRQLLERDKTP) are cytoplasmic. Residues 33 to 69 (LAILFMAAVVGTLVGLAAVAFDKGVAWLQNQRMGALV) traverse the membrane as a helical segment. Residues 70 to 76 (HTADNYP) lie on the Periplasmic side of the membrane. Residues 77–100 (LLLTVAFLCSAVLAMFGYFLVRKY) traverse the membrane as a helical segment. The short motif at 106–110 (GSGIP) is the Selectivity filter part_1 element. Serine 107 serves as a coordination point for chloride. An intramembrane region (helical) is located at residues 109 to 116 (IPEIEGAL). Residues 117–123 (EDQRPVR) are Cytoplasmic-facing. 2 helical membrane passes run 124–141 (WWRVLPVKFFGGLGTLGG) and 148–166 (EGPTVQIGGNIGRMVLDIF). The short motif at 146-150 (GREGP) is the Selectivity filter part_2 element. The Cytoplasmic portion of the chain corresponds to 167-176 (RLKGDEARHT). Intramembrane regions (helical) lie at residues 177-189 (LLATGAAAGLAAA) and 193-201 (PLAGILFII). Topologically, residues 202 to 214 (EEMRPQFRYTLIS) are cytoplasmic. Residues 215–232 (IKAVFIGVIMSTIMYRIF) traverse the membrane as a helical segment. The Periplasmic segment spans residues 233–252 (NHEVALIDVGKLSDAPLNTL). Residues 253-281 (WLYLILGIIFGIFGPIFNKWVLGMQDLLH) traverse the membrane as a helical segment. Topologically, residues 282–287 (RVHGGN) are cytoplasmic. A helical membrane pass occupies residues 288 to 309 (ITKWVLMGGAIGGLCGLLGFVA). Over 310–329 (PATSGGGFNLIPIATAGNFS) the chain is Periplasmic. 2 helical membrane passes run 330–349 (MGMLVFIFVARVITTLLCFS) and 355–376 (GIFAPMLALGTVLGTAFGMVAV). Positions 355–359 (GIFAP) match the Selectivity filter part_3 motif. Residues isoleucine 356 and phenylalanine 357 each coordinate chloride. At 377–386 (ELFPQYHLEA) the chain is on the periplasmic side. The helical intramembrane region spans 387–401 (GTFAIAGMGALLAAS). An intramembrane region (note=Loop between two helices) is located at residues 402-404 (IRA). The segment at residues 405-416 (PLTGIILVLEMT) is an intramembrane region (helical). Positions 417–421 (DNYQL) form an intramembrane region, note=Loop between two helices. A helical membrane pass occupies residues 422–438 (ILPMIITGLGATLLAQF). Residues 439-473 (TGGKPLYSAILARTLAKQEAEQLARSKAASASENT) are Cytoplasmic-facing. Tyrosine 445 contacts chloride.

Belongs to the chloride channel (TC 2.A.49) family. ClcA subfamily. As to quaternary structure, homodimer.

The protein resides in the cell inner membrane. The enzyme catalyses 2 chloride(in) + H(+)(out) = 2 chloride(out) + H(+)(in). In terms of biological role, proton-coupled chloride transporter. Functions as antiport system and exchanges two chloride ions for 1 proton. Probably acts as an electrical shunt for an outwardly-directed proton pump that is linked to amino acid decarboxylation, as part of the extreme acid resistance (XAR) response. The polypeptide is H(+)/Cl(-) exchange transporter ClcA (Escherichia coli O139:H28 (strain E24377A / ETEC)).